Reading from the N-terminus, the 109-residue chain is Putative double-stranded DNA mimic protein plu2488 (109 aa).

This sequence belongs to the putative dsDNA mimic protein family.

In terms of biological role, may act as a double-stranded DNA (dsDNA) mimic. Probably regulates the activity of a dsDNA-binding protein. This is Putative double-stranded DNA mimic protein plu2488 from Photorhabdus laumondii subsp. laumondii (strain DSM 15139 / CIP 105565 / TT01) (Photorhabdus luminescens subsp. laumondii).